The chain runs to 361 residues: Phospho-N-acetylmuramoyl-pentapeptide-transferase (361 aa).

Helical transmembrane passes span 17-37, 66-86, 90-110, 129-149, 162-182, 197-217, 232-252, 261-281, 286-306, and 340-360; these read SIYLRAFLGFVISFCIVLFAG, GTPTMGGVLIIAAVLLTSIFI, TNSLILLVLLSTIMFAAIGFI, LLFQGAIGLIIWAYIYFIGLT, ISAYPYYIGAIGLFFLIQIVL, GLAIMPMIICSTILGVIAYFT, VGSGELSVFLSAVTGAGLGFL, IFMGDTGSLTLGGILGVIAII, LMLPIMGFIFVLEALSVILQV, and FWIGTLIFGIIALGAIKMRGI.

It belongs to the glycosyltransferase 4 family. MraY subfamily. Mg(2+) serves as cofactor.

The protein resides in the cell inner membrane. The catalysed reaction is UDP-N-acetyl-alpha-D-muramoyl-L-alanyl-gamma-D-glutamyl-meso-2,6-diaminopimeloyl-D-alanyl-D-alanine + di-trans,octa-cis-undecaprenyl phosphate = di-trans,octa-cis-undecaprenyl diphospho-N-acetyl-alpha-D-muramoyl-L-alanyl-D-glutamyl-meso-2,6-diaminopimeloyl-D-alanyl-D-alanine + UMP. It participates in cell wall biogenesis; peptidoglycan biosynthesis. In terms of biological role, catalyzes the initial step of the lipid cycle reactions in the biosynthesis of the cell wall peptidoglycan: transfers peptidoglycan precursor phospho-MurNAc-pentapeptide from UDP-MurNAc-pentapeptide onto the lipid carrier undecaprenyl phosphate, yielding undecaprenyl-pyrophosphoryl-MurNAc-pentapeptide, known as lipid I. The sequence is that of Phospho-N-acetylmuramoyl-pentapeptide-transferase from Fusobacterium nucleatum subsp. nucleatum (strain ATCC 25586 / DSM 15643 / BCRC 10681 / CIP 101130 / JCM 8532 / KCTC 2640 / LMG 13131 / VPI 4355).